We begin with the raw amino-acid sequence, 243 residues long: 1-(5-phosphoribosyl)-5-[(5-phosphoribosylamino)methylideneamino] imidazole-4-carboxamide isomerase (243 aa).

Asp8 (proton acceptor) is an active-site residue. Residue Asp129 is the Proton donor of the active site.

Belongs to the HisA/HisF family.

The protein resides in the cytoplasm. It carries out the reaction 1-(5-phospho-beta-D-ribosyl)-5-[(5-phospho-beta-D-ribosylamino)methylideneamino]imidazole-4-carboxamide = 5-[(5-phospho-1-deoxy-D-ribulos-1-ylimino)methylamino]-1-(5-phospho-beta-D-ribosyl)imidazole-4-carboxamide. Its pathway is amino-acid biosynthesis; L-histidine biosynthesis; L-histidine from 5-phospho-alpha-D-ribose 1-diphosphate: step 4/9. This chain is 1-(5-phosphoribosyl)-5-[(5-phosphoribosylamino)methylideneamino] imidazole-4-carboxamide isomerase, found in Nitratidesulfovibrio vulgaris (strain DSM 19637 / Miyazaki F) (Desulfovibrio vulgaris).